A 629-amino-acid chain; its full sequence is DNA mismatch repair protein MutL (629 aa).

The protein belongs to the DNA mismatch repair MutL/HexB family.

This protein is involved in the repair of mismatches in DNA. It is required for dam-dependent methyl-directed DNA mismatch repair. May act as a 'molecular matchmaker', a protein that promotes the formation of a stable complex between two or more DNA-binding proteins in an ATP-dependent manner without itself being part of a final effector complex. The chain is DNA mismatch repair protein MutL from Haemophilus influenzae (strain 86-028NP).